Here is a 421-residue protein sequence, read N- to C-terminus: Zinc metalloproteinase-disintegrin-like lachestatin-1 (421 aa).

Residues 10–206 (KYVKLVLVAD…DMPQCILEKP (197 aa)) enclose the Peptidase M12B domain. 3 disulfide bridges follow: Cys121–Cys201, Cys161–Cys185, and Cys163–Cys168. Residue His146 coordinates Zn(2+). The active site involves Glu147. The Zn(2+) site is built by His150 and His156. The region spanning 214-299 (PPVCGNYFVE…AECTDRFQRN (86 aa)) is the Disintegrin domain. Ca(2+)-binding residues include Val216, Asn219, Phe221, Glu223, Glu226, and Asp229. Disulfide bonds link Cys217–Cys246, Cys228–Cys241, Cys230–Cys236, Cys240–Cys263, Cys254–Cys260, Cys259–Cys285, Cys272–Cys292, Cys279–Cys310, Cys303–Cys315, Cys322–Cys372, Cys337–Cys383, Cys350–Cys360, Cys367–Cys409, and Cys403–Cys414. The D/ECD-tripeptide motif lies at 278-280 (ECD). Residues Asp280, Met281, Asp283, Asp294, and Arg295 each coordinate Ca(2+). Asn312 carries an N-linked (GlcNAc...) asparagine glycan.

The protein belongs to the venom metalloproteinase (M12B) family. P-III subfamily. P-IIIc sub-subfamily. Homodimer; disulfide-linked. Zn(2+) is required as a cofactor. Expressed by the venom gland.

The protein localises to the secreted. Snake venom zinc metalloprotease that induces apoptosis in vascular endothelial cells (VEC), without degrading the extracellular matrix (it cannot cleave collagen) or inhibiting adhesion of VEC. Has also fibrinogenolytic and hemorrhagic activities. This Lachesis muta rhombeata (Bushmaster) protein is Zinc metalloproteinase-disintegrin-like lachestatin-1.